The primary structure comprises 118 residues: UPF0231 protein PM0457 (118 aa).

Belongs to the UPF0231 family.

This is UPF0231 protein PM0457 from Pasteurella multocida (strain Pm70).